The chain runs to 575 residues: Methionine--tRNA ligase, mitochondrial (575 aa).

The short motif at 20–32 (PIFYPNAKPHLGH) is the 'HIGH' region element. The 'KMSKS' region motif lies at 341–345 (KMSKS). An ATP-binding site is contributed by Lys344.

The protein belongs to the class-I aminoacyl-tRNA synthetase family.

Its subcellular location is the mitochondrion matrix. The catalysed reaction is tRNA(Met) + L-methionine + ATP = L-methionyl-tRNA(Met) + AMP + diphosphate. Functionally, catalyzes the attachment of methionine to tRNA(Met) in the mitochondrion. This Saccharomyces cerevisiae (strain ATCC 204508 / S288c) (Baker's yeast) protein is Methionine--tRNA ligase, mitochondrial (MSM1).